A 312-amino-acid chain; its full sequence is Malate dehydrogenase (312 aa).

NAD(+) is bound by residues 12–17 (GAGFTG) and Asp-36. Arg-87 and Arg-93 together coordinate substrate. Residues Asn-100 and 123–125 (LTN) contribute to the NAD(+) site. Substrate is bound at residue Asn-125. Ser-149 bears the Phosphoserine mark. Arg-156 contributes to the substrate binding site. His-180 serves as the catalytic Proton acceptor.

Belongs to the LDH/MDH superfamily. MDH type 3 family.

The catalysed reaction is (S)-malate + NAD(+) = oxaloacetate + NADH + H(+). In terms of biological role, catalyzes the reversible oxidation of malate to oxaloacetate. This chain is Malate dehydrogenase, found in Bacillus cereus (strain ZK / E33L).